We begin with the raw amino-acid sequence, 83 residues long: Large ribosomal subunit protein uL24 (83 aa).

The protein belongs to the universal ribosomal protein uL24 family. As to quaternary structure, part of the 50S ribosomal subunit.

Its function is as follows. One of two assembly initiator proteins, it binds directly to the 5'-end of the 23S rRNA, where it nucleates assembly of the 50S subunit. One of the proteins that surrounds the polypeptide exit tunnel on the outside of the subunit. The chain is Large ribosomal subunit protein uL24 from Symbiobacterium thermophilum (strain DSM 24528 / JCM 14929 / IAM 14863 / T).